The following is a 261-amino-acid chain: MLTKRIIPCLDVTDGRVKKGVNFVNLVDVGDPVAIARRYQEQGADELVFLDITATNQGRQATVDMVAAVSRQVFMPLTVGGGIRSVEDMRALLLAGADKVSLNSSAVADPDLISAGARLFGNQCFVTAIDVKTDPATGQKMVYTHGGTKPTGLEALAWAKQVVSLGSGELLVTSMDKDGTQDGYDTAFYKELTAAVDVPVIASGGAGKIDDFADVFLNSGVTGALAASVFHFQQLTIAQVKEDLIKKGVPVRWNQTLQRGS.

Catalysis depends on residues Asp11 and Asp130.

Belongs to the HisA/HisF family. In terms of assembly, heterodimer of HisH and HisF.

It localises to the cytoplasm. The enzyme catalyses 5-[(5-phospho-1-deoxy-D-ribulos-1-ylimino)methylamino]-1-(5-phospho-beta-D-ribosyl)imidazole-4-carboxamide + L-glutamine = D-erythro-1-(imidazol-4-yl)glycerol 3-phosphate + 5-amino-1-(5-phospho-beta-D-ribosyl)imidazole-4-carboxamide + L-glutamate + H(+). Its pathway is amino-acid biosynthesis; L-histidine biosynthesis; L-histidine from 5-phospho-alpha-D-ribose 1-diphosphate: step 5/9. In terms of biological role, IGPS catalyzes the conversion of PRFAR and glutamine to IGP, AICAR and glutamate. The HisF subunit catalyzes the cyclization activity that produces IGP and AICAR from PRFAR using the ammonia provided by the HisH subunit. In Limosilactobacillus fermentum (strain NBRC 3956 / LMG 18251) (Lactobacillus fermentum), this protein is Imidazole glycerol phosphate synthase subunit HisF.